The sequence spans 404 residues: Dual-specificity RNA methyltransferase RlmN (404 aa).

Glu119 serves as the catalytic Proton acceptor. Positions 126–358 constitute a Radical SAM core domain; that stretch reads VGRAGALCVS…NKAGYSSPIR (233 aa). Cys133 and Cys369 are joined by a disulfide. Residues Cys140, Cys144, and Cys147 each contribute to the [4Fe-4S] cluster site. S-adenosyl-L-methionine contacts are provided by residues 195-196, Ser227, 249-251, and Asn326; these read GE and SLH. Cys369 (S-methylcysteine intermediate) is an active-site residue.

This sequence belongs to the radical SAM superfamily. RlmN family. The cofactor is [4Fe-4S] cluster.

The protein localises to the cytoplasm. The enzyme catalyses adenosine(2503) in 23S rRNA + 2 reduced [2Fe-2S]-[ferredoxin] + 2 S-adenosyl-L-methionine = 2-methyladenosine(2503) in 23S rRNA + 5'-deoxyadenosine + L-methionine + 2 oxidized [2Fe-2S]-[ferredoxin] + S-adenosyl-L-homocysteine. It carries out the reaction adenosine(37) in tRNA + 2 reduced [2Fe-2S]-[ferredoxin] + 2 S-adenosyl-L-methionine = 2-methyladenosine(37) in tRNA + 5'-deoxyadenosine + L-methionine + 2 oxidized [2Fe-2S]-[ferredoxin] + S-adenosyl-L-homocysteine. Functionally, specifically methylates position 2 of adenine 2503 in 23S rRNA and position 2 of adenine 37 in tRNAs. m2A2503 modification seems to play a crucial role in the proofreading step occurring at the peptidyl transferase center and thus would serve to optimize ribosomal fidelity. This Caulobacter sp. (strain K31) protein is Dual-specificity RNA methyltransferase RlmN.